Consider the following 1030-residue polypeptide: ATPase MORC2A (1030 aa).

Ala2 carries the N-acetylalanine modification. Residues Asn39, 87–89 (SAK), and 99–105 (QYGNGLK) contribute to the ATP site. Position 39 (Asn39) interacts with Mg(2+). Residues 285-362 (KTRAEQEVKK…KDAKQRALKE (78 aa)) are a coiled coil. Lys427 is an ATP binding site. Residues 490–544 (AMEIPTTIQCDLCLKWRTLPFQLSSVETDYPDTWVCSMNPDPEQDRCEASEQKQK) form a CW-type zinc finger. Zn(2+) contacts are provided by Cys499, Cys502, Cys525, and Cys536. The interval 530 to 791 (DPEQDRCEAS…HPAELRKAQK (262 aa)) is disordered. Composition is skewed to basic and acidic residues over residues 532–543 (EQDRCEASEQKQ) and 550–577 (LKKD…KLEA). Residues 555 to 583 (KTQEEKQKQLTEKIRQQQEKLEALQKTTP) adopt a coiled-coil conformation. Thr582 is modified (phosphothreonine). Ser614 is modified (phosphoserine). The segment covering 629–646 (PSIQTPRPSTQLRKTSVI) has biased composition (polar residues). Residues Lys650 and Lys702 each participate in a glycyl lysine isopeptide (Lys-Gly) (interchain with G-Cter in SUMO2) cross-link. Residues 693–702 (PPLSLIPSSK) are compositionally biased toward low complexity. Residue Ser703 is modified to Phosphoserine. Lys714 participates in a covalent cross-link: Glycyl lysine isopeptide (Lys-Gly) (interchain with G-Cter in SUMO2). Ser728 is modified (phosphoserine). Thr731 bears the Phosphothreonine mark. Phosphoserine is present on residues Ser737 and Ser741. Positions 738–775 (LAVSDEEEAEEEAEKRRERCKRGKLAVKEEKKEANELS) form a coiled coil. The span at 763 to 772 (AVKEEKKEAN) shows a compositional bias: basic and acidic residues. Lys765 is covalently cross-linked (Glycyl lysine isopeptide (Lys-Gly) (interchain with G-Cter in SUMO2)). Phosphoserine occurs at positions 775 and 777. Residues 779–791 (GEDHPAELRKAQK) show a composition bias toward basic and acidic residues. A Glycyl lysine isopeptide (Lys-Gly) (interchain with G-Cter in SUMO2) cross-link involves residue Lys817. Position 834 is a phosphothreonine (Thr834). Positions 837-849 (DRWVEKGSEDVRL) are enriched in basic and acidic residues. Disordered regions lie at residues 837 to 874 (DRWV…EAMV) and 882 to 901 (PEPS…ATSP). Phosphoserine occurs at positions 854 and 859. The span at 856–865 (EHQSPDTQQE) shows a compositional bias: polar residues. Lys930 is covalently cross-linked (Glycyl lysine isopeptide (Lys-Gly) (interchain with G-Cter in SUMO2)). A coiled-coil region spans residues 966–1011 (RADSRAKASEESLRTSEKKLRETEEKLQKLRTNIVALLQKVQEDID).

As to quaternary structure, homodimerizes upon ATP-binding and dissociate upon ATP hydrolysis; homodimerization is required for gene silencing. Binds histone H3 independently of the methylation status at 'Lys-9'. Interacts with HDAC4. Interacts with FAM208A/TASOR and MPHOSPH8; the interactions associate MORC2 with the HUSH complex which recruits MORC2 to heterochromatic loci. Interacts with Morc2b. Post-translationally, phosphorylated by PAK1 at Ser-737 upon DNA damage. Phosphorylation is required for ATPase activity and recruitment to damaged chromatin. In terms of tissue distribution, expressed in the axons and Schwann cells of peripheral nerves. Expressed in testes.

It localises to the nucleus. The protein localises to the cytoplasm. It is found in the cytosol. Its subcellular location is the chromosome. The protein resides in the nucleus matrix. It carries out the reaction ATP + H2O = ADP + phosphate + H(+). ATPase activity is dependent of phosphorylation by PAK1 and presence of DNA. Its function is as follows. Essential for epigenetic silencing by the HUSH complex. Recruited by HUSH to target site in heterochromatin, the ATPase activity and homodimerization are critical for HUSH-mediated silencing. Represses germ cell-related genes and L1 retrotransposons in collaboration with SETDB1 and the HUSH complex, the silencing is dependent of repressive epigenetic modifications, such as H3K9me3 mark. Silencing events often occur within introns of transcriptionally active genes, and lead to the down-regulation of host gene expression. During DNA damage response, regulates chromatin remodeling through ATP hydrolysis. During DNA damage response, may regulate chromatin remodeling through ATP hydrolysis. This is ATPase MORC2A from Mus musculus (Mouse).